The sequence spans 133 residues: UPF0102 protein Anae109_1947 (133 aa).

It belongs to the UPF0102 family.

The protein is UPF0102 protein Anae109_1947 of Anaeromyxobacter sp. (strain Fw109-5).